Reading from the N-terminus, the 447-residue chain is Asparagine--tRNA ligase (447 aa).

The protein belongs to the class-II aminoacyl-tRNA synthetase family. Homodimer.

It localises to the cytoplasm. It carries out the reaction tRNA(Asn) + L-asparagine + ATP = L-asparaginyl-tRNA(Asn) + AMP + diphosphate + H(+). This Herpetosiphon aurantiacus (strain ATCC 23779 / DSM 785 / 114-95) protein is Asparagine--tRNA ligase.